Here is a 465-residue protein sequence, read N- to C-terminus: Auxin transporter-like protein 3 (465 aa).

The Cytoplasmic portion of the chain corresponds to 1–52 (MTSEKVETVVAGNYLEMEREEEGSKSTTGKLSKFFWHGGSVYDAWFSCASNQ). A helical membrane pass occupies residues 53-70 (VAQVLLTLPYSFSQLGML). At 71–72 (SG) the chain is on the extracellular side. The helical transmembrane segment at 73 to 93 (ILFQIFYGLMGSWTAYIISVL) threads the bilayer. Residues 94–129 (YVEYRTRKEREKVDFRNHVIQWFEVLDGLLGKHWRN) lie on the Cytoplasmic side of the membrane. Residues 130-150 (LGLFFNCTFLLFGSVIQLIAC) form a helical membrane-spanning segment. Residues 151–165 (ASNIYYINDHLDKRT) lie on the Extracellular side of the membrane. A helical transmembrane segment spans residues 166–186 (WTYIFGACCATTVFIPSFHNY). Topologically, residues 187-189 (RIW) are cytoplasmic. The helical transmembrane segment at 190-210 (SFLGLVMTTYTAWYMTIASIL) threads the bilayer. Over 211-225 (HGQAEDVKHSGPTKL) the chain is Extracellular. A helical transmembrane segment spans residues 226 to 246 (VLYFTGATNILYTFGGHAVTV). The Cytoplasmic portion of the chain corresponds to 247–259 (EIMHAMWKPQKFK). Residues 260–280 (MIYLIATLYVMTLTLPSAAAV) traverse the membrane as a helical segment. Over 281-307 (YWAFGDNLLTHSNALSLLPRTGFRDTA) the chain is Extracellular. A helical membrane pass occupies residues 308–328 (VILMLIHQFITFGFACTPLYF). Residues 329 to 349 (VWEKFLGVHETKSLLKRALVR) lie on the Cytoplasmic side of the membrane. A helical transmembrane segment spans residues 350-370 (LPVVIPIWFLAIIFPFFGPIN). Over 371–374 (STVG) the chain is Extracellular. A helical membrane pass occupies residues 375–395 (SLLVSFTVYIIPALAHMVTFA). Topologically, residues 396–421 (SAPARENAVERPPSFLGGWVGLYSVN) are cytoplasmic. Residues 422 to 442 (VFVAVWVLVVGFGLGGWASML) form a helical membrane-spanning segment. Topologically, residues 443 to 465 (NFVHQIKTFGLFAKCFQCPPHKA) are extracellular.

It belongs to the amino acid/polyamine transporter 2 family. Amino acid/auxin permease (AAAP) (TC 2.A.18.1) subfamily. Shoots and roots of nodulating plants. Low levels in roots, nodules, stems, petioles, leaves, shoot apices and flowers.

It localises to the cell membrane. In terms of biological role, carrier protein involved in proton-driven auxin influx. Mediates the formation of auxin gradient from developing leaves (site of auxin biosynthesis) to tips by contributing to the loading of auxin in vascular tissues and facilitating acropetal (base to tip) auxin transport within inner tissues of the root apex, and basipetal (tip to base) auxin transport within outer tissues of the root apex. May be involved in lateral roots and nodules formation. The polypeptide is Auxin transporter-like protein 3 (LAX3) (Medicago truncatula (Barrel medic)).